Here is a 143-residue protein sequence, read N- to C-terminus: Transcriptional regulator MraZ (143 aa).

SpoVT-AbrB domains lie at 5 to 47 (TYTP…PREE) and 76 to 119 (TDEQ…DAQA).

The protein belongs to the MraZ family. Forms oligomers.

The protein localises to the cytoplasm. It localises to the nucleoid. The chain is Transcriptional regulator MraZ from Rhodococcus jostii (strain RHA1).